The sequence spans 283 residues: Para-Rep C10 (283 aa).

One can recognise a CRESS-DNA virus Rep endonuclease domain in the interval 3-96 (SIRAIHWCFT…IDGPWEYGTW (94 aa)). The RCR-1 signature appears at 10 to 13 (CFTL). The a divalent metal cation site is built by glutamate 36 and histidine 42. The short motif at 42–44 (HLQ) is the RCR-2 element. A Nuclear localization signal motif is present at residues 51–71 (KQTTLKKMKELLPGAHLEMAR). Tyrosine 79 acts as the For DNA cleavage activity in catalysis. The short motif at 79–82 (YCQK) is the RCR-3 element. Glutamate 84 contacts a divalent metal cation. The Nuclear localization signal motif lies at 96 to 102 (WISTGSH). 172–180 (GPHGGEGKS) provides a ligand contact to ATP.

Belongs to the nanoviridea/circoviridae replication-associated protein family. As to quaternary structure, homooligomer (Potential). Rep binds to repeated DNA motifs (iterons). It depends on Mg(2+) as a cofactor. The cofactor is Mn(2+).

It is found in the host nucleus. It catalyses the reaction ATP + H2O = ADP + phosphate + H(+). Its function is as follows. Initiates and terminates the replication only of its own subviral DNA molecule. The closed circular ssDNA genome is first converted to a superhelical dsDNA. Rep binds a specific hairpin at the genome origin of replication. Introduces an endonucleolytic nick within the intergenic region of the genome, thereby initiating the rolling circle replication (RCR). Following cleavage, binds covalently to the 5'-phosphate of DNA as a tyrosyl ester. The cleavage gives rise to a free 3'-OH that serves as a primer for the cellular DNA polymerase. The polymerase synthesizes the (+) strand DNA by rolling circle mechanism. After one round of replication, a Rep-catalyzed nucleotidyl transfer reaction releases a circular single-stranded virus genome, thereby terminating the replication. Displays origin-specific DNA cleavage, nucleotidyl transferase, ATPase and helicase activities. This chain is Para-Rep C10 (C10), found in Milk vetch dwarf C10 alphasatellite (MVDC10A).